The chain runs to 88 residues: Large ribosomal subunit protein eL15 (88 aa).

The protein belongs to the eukaryotic ribosomal protein eL15 family.

The chain is Large ribosomal subunit protein eL15 (RPL15) from Brassica napus (Rape).